Here is a 419-residue protein sequence, read N- to C-terminus: L-rhamnose isomerase (419 aa).

3 residues coordinate Mn(2+): H262, D294, and D296.

This sequence belongs to the rhamnose isomerase family. As to quaternary structure, homotetramer. Mn(2+) serves as cofactor.

The protein resides in the cytoplasm. The enzyme catalyses L-rhamnopyranose = L-rhamnulose. Its pathway is carbohydrate degradation; L-rhamnose degradation; glycerone phosphate from L-rhamnose: step 1/3. Its function is as follows. Catalyzes the interconversion of L-rhamnose and L-rhamnulose. The polypeptide is L-rhamnose isomerase (Salmonella typhimurium (strain LT2 / SGSC1412 / ATCC 700720)).